Reading from the N-terminus, the 558-residue chain is Atlastin-1 (558 aa).

The tract at residues 1–28 is disordered; it reads MAKSRRDRNSWGGFSEKSSDWSSEEEEP. The N-terminal hypervariable region (HVR) stretch occupies residues 1–34; that stretch reads MAKSRRDRNSWGGFSEKSSDWSSEEEEPVRKAGP. The Cytoplasmic segment spans residues 1 to 449; sequence MAKSRRDRNS…NIFHAARTPA (449 aa). Residues S10, S22, and S23 each carry the phosphoserine modification. A GB1/RHD3-type G domain is found at 64–309; it reads DKEVVAVSVA…LIPWLLSPER (246 aa). Residues R77, K78, G79, K80, S81, F82, Q148, R217, D218, V276, and N279 each coordinate GDP. GTP contacts are provided by R77, K78, G79, K80, S81, and F82. S81 serves as a coordination point for Mg(2+). GTP is bound by residues R217, D218, and V276. The segment at 347 to 438 is 3HB (three-helix bundle) domain; it reads MLQATAEANN…YIQYIKHNDS (92 aa). K395 is modified (N6-acetyllysine). Residues 412-439 are a coiled coil; that stretch reads EFSRRYLQQLESEIDELYIQYIKHNDSK. Residues 439-447 are linker; that stretch reads KNIFHAART. A helical membrane pass occupies residues 450 to 470; it reads TLFVVIFITYVIAGVTGFIGL. Residue D471 is a topological domain, lumenal. Residues 472–492 traverse the membrane as a helical segment; the sequence is IIASLCNMIMGLTLITLCTWA. At 493-558 the chain is on the cytoplasmic side; it reads YIRYSGEYRE…PTQQPEKKKI (66 aa). Residues 521–558 form an autoinhibitory domain region; it reads NEALYKLYSAAATHRHLCHQAFPAPKSEPTQQPEKKKI.

The protein belongs to the TRAFAC class dynamin-like GTPase superfamily. GB1/RHD3 GTPase family. GB1 subfamily. As to quaternary structure, monomeric and homodimeric. The homodimer, transiently formed by two molecules on opposing membranes, is the active form mediating ER membrane fusion. Interacts with REEP1, REEP5, RTN3 and RTN4 (via the transmembrane region); these proteins are involved in endoplasmic reticulum tubular network organization. Interacts with ZFYVE27; both proteins are involved in endoplasmic reticulum tubular network organization. Interacts with ARL6IP1; both proteins are involved in endoplasmic reticulum tubular network organization. Interacts with SPAST; the interaction is direct, could recruit SPAST to Golgi membranes. Interacts (via N-terminal region) with MAP4K4 (via CNH regulatory domain). May interact with TMED2. Interacts with CPT1C. In terms of processing, phosphorylated. Phosphorylation, by different kinases, of the N-terminal hypervariable region (HVR) regulates the ATL1-mediated membrane tethering step.

It localises to the endoplasmic reticulum membrane. The protein resides in the golgi apparatus membrane. It is found in the cell projection. Its subcellular location is the axon. It carries out the reaction GTP + H2O = GDP + phosphate + H(+). Atlastin-1 (ATL1) is a membrane-anchored GTPase that mediates the GTP-dependent fusion of endoplasmic reticulum (ER) membranes, maintaining the continuous ER network. It facilitates the formation of three-way junctions where ER tubules intersect. Two atlastin-1 on neighboring ER tubules bind GTP and form loose homodimers through the GB1/RHD3-type G domains and 3HB regions. Upon GTP hydrolysis, the 3HB regions tighten, pulling the membranes together to drive their fusion. After fusion, the homodimer disassembles upon release of inorganic phosphate (Pi). Subsequently, GDP dissociates, resetting the monomers to a conformation ready for a new fusion cycle. May also regulate more or less directly Golgi biogenesis. Indirectly regulates axonal development. This chain is Atlastin-1, found in Mus musculus (Mouse).